We begin with the raw amino-acid sequence, 44 residues long: Photosystem I reaction center subunit IX (44 aa).

A helical membrane pass occupies residues 9–29 (WFRSAPVVATIWIVLTAGILV).

The protein belongs to the PsaJ family.

The protein resides in the cellular thylakoid membrane. Its function is as follows. May help in the organization of the PsaE and PsaF subunits. The protein is Photosystem I reaction center subunit IX of Prochlorococcus marinus (strain MIT 9211).